The chain runs to 222 residues: Putative O-methyltransferase MAP_2558 (222 aa).

Residues Val49, Glu71, 73–74, Ser79, Asp97, and Ile98 each bind S-adenosyl-L-methionine; that span reads GT. Asp145 is a substrate binding site. Asp147 provides a ligand contact to S-adenosyl-L-methionine.

The protein belongs to the class I-like SAM-binding methyltransferase superfamily. Cation-dependent O-methyltransferase family.

The sequence is that of Putative O-methyltransferase MAP_2558 from Mycolicibacterium paratuberculosis (strain ATCC BAA-968 / K-10) (Mycobacterium paratuberculosis).